The chain runs to 410 residues: E3 ubiquitin-protein ligase ICP0 (410 aa).

The RING-type zinc finger occupies 46–85 (CPICLDVAATEAQTLPCMHKFCLDCIQRWTLTSTACPLCN). Positions 243 to 410 (TSESEAHSDS…IFIDLTQDDD (168 aa)) are disordered. Basic residues predominate over residues 287-315 (APRRSPRRARRAAVLRREQRRTRCLRRGR). 2 stretches are compositionally biased toward low complexity: residues 329-340 (SSGEGSSAQHGA) and 348-399 (GSAN…PRSA).

Auto-ubiquitinated.

It catalyses the reaction S-ubiquitinyl-[E2 ubiquitin-conjugating enzyme]-L-cysteine + [acceptor protein]-L-lysine = [E2 ubiquitin-conjugating enzyme]-L-cysteine + N(6)-ubiquitinyl-[acceptor protein]-L-lysine.. Its function is as follows. Evades nuclear antiviral defenses triggered by dsDNA viruses. Acts during the initial stages of lytic infection and the reactivation of latent viral genome. Prevents the antiviral effect of nuclear bodies by degrading host PML and SP100. This is E3 ubiquitin-protein ligase ICP0 (EP0) from Sus scrofa (Pig).